Consider the following 598-residue polypeptide: Serine hydroxymethyltransferase 7 (598 aa).

Residues 57-85 are disordered; the sequence is QLLEQKAEKTTTVDEPKKDGGGGGDQKED. Residues 61–85 show a composition bias toward basic and acidic residues; sequence QKAEKTTTVDEPKKDGGGGGDQKED. Lysine 370 is subject to N6-(pyridoxal phosphate)lysine.

Belongs to the SHMT family. In terms of assembly, homotetramer. Requires pyridoxal 5'-phosphate as cofactor.

The protein resides in the cytoplasm. It catalyses the reaction (6R)-5,10-methylene-5,6,7,8-tetrahydrofolate + glycine + H2O = (6S)-5,6,7,8-tetrahydrofolate + L-serine. The protein operates within one-carbon metabolism; tetrahydrofolate interconversion. Functionally, catalyzes the interconversion of serine and glycine. This is Serine hydroxymethyltransferase 7 (SHM7) from Arabidopsis thaliana (Mouse-ear cress).